The sequence spans 446 residues: MITIKKGLDLPIAGTPEQVIHDGPSITEIAILGEEYVGMRPFMAVKVGDIVKKGQILFSDKRNSGVHFTSPASGTVKAINRGAQRVLQSVVIAIEGKESISFPKYTSTELKNVGRAEIVKNLIDSGAWTALRTRPFSKIPAVDAEPVSIFVTAMDTNPLAADAELIINTNKQAFTDGLALLEQLTAGKVYVCKGETNLPKSESVNVEEKLFSGVHPAGLAGTHIHFIDPVSAVKQVWSINYQDVIAFGMLFTTGELYTNKVISLAGPAVKKPRLLRTHYGASINQLTKNELIDDEVRVISGSVLCGVTATAAHAYLGRYHNQISVLAEGYEKELFGWGVPGSKKHSVSNAFISAFNRAKSFAFTTTTGGSKRAMVPIGQYERIMPLDILPTNLLRDLIVGDTEEAQALGCLELDEEDLALCTYVCPGKYDYGSVLRASLSKIEKEG.

This sequence belongs to the NqrA family. As to quaternary structure, composed of six subunits; NqrA, NqrB, NqrC, NqrD, NqrE and NqrF.

It catalyses the reaction a ubiquinone + n Na(+)(in) + NADH + H(+) = a ubiquinol + n Na(+)(out) + NAD(+). Its function is as follows. NQR complex catalyzes the reduction of ubiquinone-1 to ubiquinol by two successive reactions, coupled with the transport of Na(+) ions from the cytoplasm to the periplasm. NqrA to NqrE are probably involved in the second step, the conversion of ubisemiquinone to ubiquinol. The polypeptide is Na(+)-translocating NADH-quinone reductase subunit A (Psychromonas ingrahamii (strain DSM 17664 / CCUG 51855 / 37)).